The following is a 373-amino-acid chain: Lipoyl amidotransferase LIPT1, mitochondrial (373 aa).

The transit peptide at 1 to 25 directs the protein to the mitochondrion; that stretch reads MLIPFSMKNCFQLLCNLKVPAAGFK. Residues 57–243 enclose the BPL/LPL catalytic domain; the sequence is LEGKPVLFLW…EYATSHQIDN (187 aa). Tyr107, Arg151, Lys161, Thr179, Thr208, and Ala210 together coordinate (R)-lipoyl-5'-AMP.

It belongs to the LplA family.

It is found in the mitochondrion. It catalyses the reaction N(6)-[(R)-lipoyl]-L-lysyl-[glycine-cleavage complex H protein] + L-lysyl-[lipoyl-carrier protein] = L-lysyl-[glycine-cleavage complex H protein] + N(6)-[(R)-lipoyl]-L-lysyl-[lipoyl-carrier protein]. The catalysed reaction is (R)-lipoyl-5'-AMP + L-lysyl-[lipoyl-carrier protein] = N(6)-[(R)-lipoyl]-L-lysyl-[lipoyl-carrier protein] + AMP + 2 H(+). It participates in protein modification; protein lipoylation via exogenous pathway; protein N(6)-(lipoyl)lysine from lipoate: step 2/2. Its activity is regulated as follows. Inhibited by lipoyl-AMP analogs including hexanoyl-, octanoyl- and decanoyl-AMP. Functionally, lipoyl amidotransferase that catalyzes the transfer of lipoyl moieties from lipoyl-protein H of the glycine cleavage system (lipoyl-GCSH) to E2 subunits of the pyruvate dehydrogenase complex (PDCE2). Unable to catalyze the transfer of octanoyl from octanoyl-GCSH to PDCE2. In vitro, it is also able to catalyze the transfer of the lipoyl group from lipoyl-AMP to the specific lysine residue of lipoyl domains of lipoate-dependent enzymes but this reaction may not be physiologically relevant. The protein is Lipoyl amidotransferase LIPT1, mitochondrial (LIPT1) of Bos taurus (Bovine).